We begin with the raw amino-acid sequence, 269 residues long: Thiazole synthase (269 aa).

Lys109 (schiff-base intermediate with DXP) is an active-site residue. 1-deoxy-D-xylulose 5-phosphate is bound by residues Gly170, 196–197 (AG), and 218–219 (NT).

It belongs to the ThiG family. Homotetramer. Forms heterodimers with either ThiH or ThiS.

Its subcellular location is the plastid. The protein localises to the chloroplast. It catalyses the reaction [ThiS sulfur-carrier protein]-C-terminal-Gly-aminoethanethioate + 2-iminoacetate + 1-deoxy-D-xylulose 5-phosphate = [ThiS sulfur-carrier protein]-C-terminal Gly-Gly + 2-[(2R,5Z)-2-carboxy-4-methylthiazol-5(2H)-ylidene]ethyl phosphate + 2 H2O + H(+). It participates in cofactor biosynthesis; thiamine diphosphate biosynthesis. Catalyzes the rearrangement of 1-deoxy-D-xylulose 5-phosphate (DXP) to produce the thiazole phosphate moiety of thiamine. Sulfur is provided by the thiocarboxylate moiety of the carrier protein ThiS. In vitro, sulfur can be provided by H(2)S. This is Thiazole synthase from Thalassiosira pseudonana (Marine diatom).